A 301-amino-acid chain; its full sequence is Pyridoxal 5'-phosphate synthase subunit PdxS (301 aa).

Aspartate 31 lines the D-ribose 5-phosphate pocket. The active-site Schiff-base intermediate with D-ribose 5-phosphate is the lysine 88. Glycine 160 contributes to the D-ribose 5-phosphate binding site. A D-glyceraldehyde 3-phosphate-binding site is contributed by arginine 172. D-ribose 5-phosphate-binding positions include glycine 221 and 242 to 243 (GS). A disordered region spans residues 273–301 (EIAKSPGKGMKGQANETLPEEEKLQDRGI). A compositionally biased stretch (basic and acidic residues) spans 292–301 (EEEKLQDRGI).

It belongs to the PdxS/SNZ family. In the presence of PdxT, forms a dodecamer of heterodimers.

It carries out the reaction aldehydo-D-ribose 5-phosphate + D-glyceraldehyde 3-phosphate + L-glutamine = pyridoxal 5'-phosphate + L-glutamate + phosphate + 3 H2O + H(+). It functions in the pathway cofactor biosynthesis; pyridoxal 5'-phosphate biosynthesis. In terms of biological role, catalyzes the formation of pyridoxal 5'-phosphate from ribose 5-phosphate (RBP), glyceraldehyde 3-phosphate (G3P) and ammonia. The ammonia is provided by the PdxT subunit. Can also use ribulose 5-phosphate and dihydroxyacetone phosphate as substrates, resulting from enzyme-catalyzed isomerization of RBP and G3P, respectively. The protein is Pyridoxal 5'-phosphate synthase subunit PdxS of Natronomonas pharaonis (strain ATCC 35678 / DSM 2160 / CIP 103997 / JCM 8858 / NBRC 14720 / NCIMB 2260 / Gabara) (Halobacterium pharaonis).